We begin with the raw amino-acid sequence, 288 residues long: Elongation factor Ts (288 aa).

The interval 82-85 (TDFV) is involved in Mg(2+) ion dislocation from EF-Tu.

Belongs to the EF-Ts family.

It localises to the cytoplasm. In terms of biological role, associates with the EF-Tu.GDP complex and induces the exchange of GDP to GTP. It remains bound to the aminoacyl-tRNA.EF-Tu.GTP complex up to the GTP hydrolysis stage on the ribosome. This is Elongation factor Ts from Chlorobium chlorochromatii (strain CaD3).